The sequence spans 87 residues: Large ribosomal subunit protein bL31B (87 aa).

This sequence belongs to the bacterial ribosomal protein bL31 family. Type B subfamily. In terms of assembly, part of the 50S ribosomal subunit.

This Staphylococcus carnosus (strain TM300) protein is Large ribosomal subunit protein bL31B.